A 319-amino-acid chain; its full sequence is Cobalamin biosynthesis protein CobD (319 aa).

The next 4 helical transmembrane spans lie at G56 to M76, V153 to A173, L204 to I224, and I290 to L310.

It belongs to the CobD/CbiB family.

Its subcellular location is the cell membrane. It functions in the pathway cofactor biosynthesis; adenosylcobalamin biosynthesis. Converts cobyric acid to cobinamide by the addition of aminopropanol on the F carboxylic group. The chain is Cobalamin biosynthesis protein CobD from Photorhabdus laumondii subsp. laumondii (strain DSM 15139 / CIP 105565 / TT01) (Photorhabdus luminescens subsp. laumondii).